The primary structure comprises 957 residues: Atromentin synthetase (957 aa).

Positions 59-464 (SVQARTFQDF…SGRIKDTVIV (406 aa)) are adenylation (A) domain. In terms of domain architecture, Carrier spans 596–674 (TPSTDDEKAL…DLAKYVNGLV (79 aa)). Residues 601-671 (DEKALAAIYA…IVSDLAKYVN (71 aa)) are thiolation and peptide carrier (T) domain. Ser633 bears the O-(pantetheine 4'-phosphoryl)serine mark. Residues 697 to 947 (PIFFVHPGVG…FDHVPQFQKI (251 aa)) form a thioesterase (TE) domain region.

It belongs to the ATP-dependent AMP-binding enzyme family.

It functions in the pathway secondary metabolite biosynthesis. The L-tyrosine:2-oxoglutarate aminotransferase atrD and the atromentin synthetase atrA catalyze consecutive steps to turn over L-tyrosine into atromentin, which represents the generic precursor molecule for the entire terphenylquinone and pulvinic acid family of pigments, which are widely distributed secondary metabolites in homobasidiomycetes. The first step is catalyzed by atrD which converts L-tyrosine in to 4-hydroxyphenylpyruvate (4-HPP). Adenylation of two 4-HPP monomers by the atrA adenylation (A) domain, ester bond formation between monomers and atrA, and symmetric C-C-bond formation between two monomers by atrA leads to atromentin. The protein is Atromentin synthetase of Tapinella panuoides (Oyster rollrim mushroom).